The primary structure comprises 318 residues: Olfactory receptor-like protein COR1 (318 aa).

Residues 1–26 lie on the Extracellular side of the membrane; the sequence is MASGNCTTPTTFILSGLTDNPGLQMP. N-linked (GlcNAc...) asparagine glycosylation is present at asparagine 5. Residues 27-49 form a helical membrane-spanning segment; the sequence is LFMVFLAIYTITLLTNLGLIALI. Residues 50-57 lie on the Cytoplasmic side of the membrane; that stretch reads SVDLHLQT. Residues 58-79 traverse the membrane as a helical segment; it reads PMYIFLQNLSFTDAAYSTVITP. Residues 80–100 lie on the Extracellular side of the membrane; that stretch reads KMLATFLEERKTISYVGCILQ. A disulfide bridge links cysteine 97 with cysteine 179. The chain crosses the membrane as a helical span at residues 101-120; it reads YFSFVLLTVTESLLLAVMAY. The Cytoplasmic segment spans residues 121 to 139; the sequence is DRYVAICKPLLYPSIMTKA. The helical transmembrane segment at 140–164 threads the bilayer; the sequence is VCWRLVESLYFLAFLNSLVHTSGLL. Topologically, residues 165–205 are extracellular; it reads KLSFCYSNVVNHFFCDISPLFQISSSSIAISELLVIISGSL. Residues 206 to 226 traverse the membrane as a helical segment; it reads FVMSSIIIILISYVFIILTVV. Over 227–239 the chain is Cytoplasmic; it reads MIRSKDGKYKAFS. A helical transmembrane segment spans residues 240 to 260; it reads TCTSHLMAVSLFHGTVIFMYL. Residues 261–271 are Extracellular-facing; that stretch reads RPVKLFSLDTD. The chain crosses the membrane as a helical span at residues 272–292; sequence KIASLFYTVVIPMLNPLIYSW. At 293–318 the chain is on the cytoplasmic side; it reads RNKEVKDALRRLTATTFGFIDSKAVQ.

This sequence belongs to the G-protein coupled receptor 1 family.

The protein resides in the cell membrane. Functionally, odorant receptor. The protein is Olfactory receptor-like protein COR1 (COR1) of Gallus gallus (Chicken).